The sequence spans 360 residues: UDP-N-acetylglucosamine--N-acetylmuramyl-(pentapeptide) pyrophosphoryl-undecaprenol N-acetylglucosamine transferase (360 aa).

UDP-N-acetyl-alpha-D-glucosamine contacts are provided by residues 11 to 13, Asn-120, Arg-161, Ser-188, and Gln-282; that span reads TGG.

The protein belongs to the glycosyltransferase 28 family. MurG subfamily.

The protein localises to the cell inner membrane. The catalysed reaction is di-trans,octa-cis-undecaprenyl diphospho-N-acetyl-alpha-D-muramoyl-L-alanyl-D-glutamyl-meso-2,6-diaminopimeloyl-D-alanyl-D-alanine + UDP-N-acetyl-alpha-D-glucosamine = di-trans,octa-cis-undecaprenyl diphospho-[N-acetyl-alpha-D-glucosaminyl-(1-&gt;4)]-N-acetyl-alpha-D-muramoyl-L-alanyl-D-glutamyl-meso-2,6-diaminopimeloyl-D-alanyl-D-alanine + UDP + H(+). Its pathway is cell wall biogenesis; peptidoglycan biosynthesis. Functionally, cell wall formation. Catalyzes the transfer of a GlcNAc subunit on undecaprenyl-pyrophosphoryl-MurNAc-pentapeptide (lipid intermediate I) to form undecaprenyl-pyrophosphoryl-MurNAc-(pentapeptide)GlcNAc (lipid intermediate II). The chain is UDP-N-acetylglucosamine--N-acetylmuramyl-(pentapeptide) pyrophosphoryl-undecaprenol N-acetylglucosamine transferase from Synechococcus sp. (strain RCC307).